Here is a 217-residue protein sequence, read N- to C-terminus: Imidazole glycerol phosphate synthase subunit HisH (217 aa).

The Glutamine amidotransferase type-1 domain occupies 3 to 217 (SVAVIDYGMG…FLRWEPWSSR (215 aa)). C82 serves as the catalytic Nucleophile. Catalysis depends on residues H193 and E195.

As to quaternary structure, heterodimer of HisH and HisF.

The protein resides in the cytoplasm. It catalyses the reaction 5-[(5-phospho-1-deoxy-D-ribulos-1-ylimino)methylamino]-1-(5-phospho-beta-D-ribosyl)imidazole-4-carboxamide + L-glutamine = D-erythro-1-(imidazol-4-yl)glycerol 3-phosphate + 5-amino-1-(5-phospho-beta-D-ribosyl)imidazole-4-carboxamide + L-glutamate + H(+). The enzyme catalyses L-glutamine + H2O = L-glutamate + NH4(+). It participates in amino-acid biosynthesis; L-histidine biosynthesis; L-histidine from 5-phospho-alpha-D-ribose 1-diphosphate: step 5/9. IGPS catalyzes the conversion of PRFAR and glutamine to IGP, AICAR and glutamate. The HisH subunit catalyzes the hydrolysis of glutamine to glutamate and ammonia as part of the synthesis of IGP and AICAR. The resulting ammonia molecule is channeled to the active site of HisF. This chain is Imidazole glycerol phosphate synthase subunit HisH, found in Methylococcus capsulatus (strain ATCC 33009 / NCIMB 11132 / Bath).